Here is a 550-residue protein sequence, read N- to C-terminus: Chaperonin GroEL (550 aa).

ATP contacts are provided by residues 30-33 (TLGP), Lys51, 87-91 (DGTTT), Gly415, 479-481 (NAA), and Asp495. The segment at 526 to 550 (KDEKSDLGNSSAPSAGGMGGMGGMM) is disordered. Residues 541–550 (GGMGGMGGMM) are compositionally biased toward gly residues.

It belongs to the chaperonin (HSP60) family. In terms of assembly, forms a cylinder of 14 subunits composed of two heptameric rings stacked back-to-back. Interacts with the co-chaperonin GroES.

Its subcellular location is the cytoplasm. The catalysed reaction is ATP + H2O + a folded polypeptide = ADP + phosphate + an unfolded polypeptide.. Its function is as follows. Together with its co-chaperonin GroES, plays an essential role in assisting protein folding. The GroEL-GroES system forms a nano-cage that allows encapsulation of the non-native substrate proteins and provides a physical environment optimized to promote and accelerate protein folding. The polypeptide is Chaperonin GroEL (Buchnera aphidicola subsp. Baizongia pistaciae (strain Bp)).